The chain runs to 1380 residues: DNA-directed RNA polymerase subunit beta (1380 aa).

Belongs to the RNA polymerase beta chain family. The RNAP catalytic core consists of 2 alpha, 1 beta, 1 beta' and 1 omega subunit. When a sigma factor is associated with the core the holoenzyme is formed, which can initiate transcription.

It catalyses the reaction RNA(n) + a ribonucleoside 5'-triphosphate = RNA(n+1) + diphosphate. DNA-dependent RNA polymerase catalyzes the transcription of DNA into RNA using the four ribonucleoside triphosphates as substrates. This chain is DNA-directed RNA polymerase subunit beta, found in Rhizobium meliloti (strain 1021) (Ensifer meliloti).